The chain runs to 447 residues: N-succinylarginine dihydrolase (447 aa).

Substrate-binding positions include 19–28, N110, and 137–138; these read AGLSFGNEAS and HR. E174 is an active-site residue. Position 212 (R212) interacts with substrate. The active site involves H248. Substrate contacts are provided by D250 and N359. The active-site Nucleophile is the C365.

It belongs to the succinylarginine dihydrolase family. Homodimer.

The enzyme catalyses N(2)-succinyl-L-arginine + 2 H2O + 2 H(+) = N(2)-succinyl-L-ornithine + 2 NH4(+) + CO2. Its pathway is amino-acid degradation; L-arginine degradation via AST pathway; L-glutamate and succinate from L-arginine: step 2/5. Its function is as follows. Catalyzes the hydrolysis of N(2)-succinylarginine into N(2)-succinylornithine, ammonia and CO(2). This is N-succinylarginine dihydrolase from Escherichia coli O17:K52:H18 (strain UMN026 / ExPEC).